The primary structure comprises 92 residues: Anti-restriction endonuclease (92 aa).

Its function is as follows. Pays a role in the inhibition of the host restriction-modification system. Strongly inhibits the host mcrA endonuclease that cleaves 5-methyl and 5-hydroxymethylcytosines at the specific DNA sequence C(me)CGG. This is Anti-restriction endonuclease (arn) from Enterobacteria phage T4 (Bacteriophage T4).